Reading from the N-terminus, the 176-residue chain is Macro domain-containing protein lmo2759 (176 aa).

Positions 1–175 (MEITIVKGDI…LYNKLINSEV (175 aa)) constitute a Macro domain.

Belongs to the MacroD-type family.

The chain is Macro domain-containing protein lmo2759 from Listeria monocytogenes serovar 1/2a (strain ATCC BAA-679 / EGD-e).